The sequence spans 160 residues: uncharacterized protein (160 aa).

A helical membrane pass occupies residues 1-21 (MSIQTLIIISIVIFILWLTFT).

Belongs to the IIV-6 203L/325L family.

It localises to the membrane. This is an uncharacterized protein from Invertebrate iridescent virus 6 (IIV-6).